The primary structure comprises 587 residues: FAD-dependent monooxygenase ankC (587 aa).

Residues 7–27 (AVDVLIIGAGPAGLIAAMWMA) form a helical membrane-spanning segment. FAD contacts are provided by tyrosine 245 and aspartate 311.

It belongs to the PheA/TfdB FAD monooxygenase family. In terms of assembly, homodimer. FAD is required as a cofactor.

The protein resides in the membrane. It catalyses the reaction cyclo(L-arginyl-L-dehydrotyrosyl) + AH2 + O2 = cyclo(L-arginyl-(Z)-dehydro-3,4-dihydroxytyrosyl) + A + H2O. It participates in secondary metabolite biosynthesis. Functionally, FAD-dependent monooxygenase; part of the ank cluster that mediates the biosynthesis of NK13650 C, a highly modified cyclo-arginine-tyrosine dipeptide. AnkC uses as substrate the dehydro-cyclodipeptide intermediate generated by the monooxygase ankB and acts as a hydroxylase that installs the m-OH through a canonical flavin-dependent aromatic hydroxylation mechanism. Within the pathway, the cyclodipeptide synthase ankA acts as the scaffold-generating enzyme and is responsible for formation of the cyclo-Arg-Tyr diketopiperazine (cRY) from L-Arg and L-Tyr. The ankA product cRY is desaturated by the cytochrome P450 monooxygenase ankB to yield a dehydro-cyclodipeptide intermediate. The FAD-dependent monooxygenase ankC then installs the m-OH, ankD catalyzes the attachment of L-homoserine, and ankE ligates citrate to the ankD product to yield NK13650 B. The O-methyltransferase ankF is responsible for methylation of the C-17 phenol group of NK13650 B to produce NK13650 D. Amidation of NK13650 D with L-Asp by ankG then leads to the production of NK13650 C, whereas amidation of NK13650 B produces NK13650 A. This is FAD-dependent monooxygenase ankC from Aspergillus thermomutatus (Neosartorya pseudofischeri).